A 324-amino-acid polypeptide reads, in one-letter code: Ribonucleoside-diphosphate reductase subunit beta nrdF2 (324 aa).

Positions 103 and 106 each coordinate Fe cation. Tyr110 is an active-site residue. Positions 163, 197, and 200 each coordinate Fe cation.

Belongs to the ribonucleoside diphosphate reductase small chain family. As to quaternary structure, tetramer of two alpha and two beta subunits. Fe cation serves as cofactor.

The enzyme catalyses a 2'-deoxyribonucleoside 5'-diphosphate + [thioredoxin]-disulfide + H2O = a ribonucleoside 5'-diphosphate + [thioredoxin]-dithiol. Functionally, provides the precursors necessary for DNA synthesis. Catalyzes the biosynthesis of deoxyribonucleotides from the corresponding ribonucleotides. This is Ribonucleoside-diphosphate reductase subunit beta nrdF2 (nrdF2) from Mycobacterium tuberculosis (strain CDC 1551 / Oshkosh).